A 345-amino-acid polypeptide reads, in one-letter code: Large ribosomal subunit protein uL10 (345 aa).

The segment at 303-345 (SLPQTAAPQQTPQPTEAPKEEAQEEKKEGPSEEEIAGSLASLF) is disordered. Low complexity predominate over residues 305–318 (PQTAAPQQTPQPTE). Residues 319–332 (APKEEAQEEKKEGP) are compositionally biased toward basic and acidic residues.

Belongs to the universal ribosomal protein uL10 family. As to quaternary structure, part of the 50S ribosomal subunit. Forms part of the ribosomal stalk which helps the ribosome interact with GTP-bound translation factors. Forms a heptameric L10(L12)2(L12)2(L12)2 complex, where L10 forms an elongated spine to which the L12 dimers bind in a sequential fashion.

Functionally, forms part of the ribosomal stalk, playing a central role in the interaction of the ribosome with GTP-bound translation factors. In Pyrobaculum aerophilum (strain ATCC 51768 / DSM 7523 / JCM 9630 / CIP 104966 / NBRC 100827 / IM2), this protein is Large ribosomal subunit protein uL10.